The chain runs to 253 residues: Probable transcriptional regulatory protein Hore_12350 (253 aa).

Positions Met1 to Arg21 are disordered.

This sequence belongs to the TACO1 family.

Its subcellular location is the cytoplasm. The sequence is that of Probable transcriptional regulatory protein Hore_12350 from Halothermothrix orenii (strain H 168 / OCM 544 / DSM 9562).